A 155-amino-acid polypeptide reads, in one-letter code: Pathogenesis-related protein STH-21 (155 aa).

The protein belongs to the BetVI family.

This chain is Pathogenesis-related protein STH-21 (STH-21), found in Solanum tuberosum (Potato).